A 510-amino-acid chain; its full sequence is Histidine ammonia-lyase (510 aa).

A cross-link (5-imidazolinone (Ala-Gly)) is located at residues 143–145; the sequence is ASG. At Ser-144 the chain carries 2,3-didehydroalanine (Ser).

Belongs to the PAL/histidase family. In terms of processing, contains an active site 4-methylidene-imidazol-5-one (MIO), which is formed autocatalytically by cyclization and dehydration of residues Ala-Ser-Gly.

It is found in the cytoplasm. It catalyses the reaction L-histidine = trans-urocanate + NH4(+). It functions in the pathway amino-acid degradation; L-histidine degradation into L-glutamate; N-formimidoyl-L-glutamate from L-histidine: step 1/3. This chain is Histidine ammonia-lyase, found in Photobacterium profundum (strain SS9).